Reading from the N-terminus, the 338-residue chain is MEMTHYEKTPLIRQVFNNGKTNSWFYVKHEILQPGGSFKSRGIGHLIRKSNQQPLSEGSGKLAVFSSSGGNAGLAAATACRSMALNCSVVVPKTTKPRMVKKIQSAGAKVIIHGDHWGEADEYLRHKLMAQESQHGSKTLYVHPFDNETIWEGHSTIVDEIIEQLKENDISLPRVKALVCSVGGGGLFSGIIKGLDRNHLAEKIPVVAVETAGCDVLNKSLKKGSPVTLEKLTSVATSLASPYIASFAFESFNKYGCKSVVLSDQDVLATCLRYADDYNFIVEPACGASLHLCYHPEILEDILEQKIYEDDIVIIIACGGSCMTYEDLVKASSTLNVS.

Lysine 39 bears the N6-(pyridoxal phosphate)lysine mark.

The protein belongs to the serine/threonine dehydratase family. The cofactor is pyridoxal 5'-phosphate.

It is found in the cytoplasm. The enzyme catalyses L-serine = pyruvate + NH4(+). It functions in the pathway carbohydrate biosynthesis; gluconeogenesis. In Saccharomyces cerevisiae (Baker's yeast), this protein is L-serine dehydratase (SDL1).